The sequence spans 261 residues: Insulin-like growth factor-binding protein-related protein 1 (261 aa).

The N-terminal stretch at 1-17 (MWIPLLLVALVVPAIRC) is a signal peptide. In terms of domain architecture, IGFBP N-terminal spans 18–101 (ERKCGECNPE…DPPEAMCVCL (84 aa)). Intrachain disulfides connect Cys21–Cys45, Cys24–Cys47, Cys29–Cys48, Cys36–Cys51, Cys59–Cys82, Cys76–Cys98, Cys100–Cys118, and Cys107–Cys139. In terms of domain architecture, Kazal-like spans 70 to 141 (NRGHGPCGEY…RAMHRGPCKS (72 aa)). The Ig-like C2-type domain occupies 143–243 (PKITSPPEEA…GESSAAARVV (101 aa)). N-linked (GlcNAc...) asparagine glycosylation is present at Asn154. A disulfide bond links Cys164 and Cys227.

Expressed by the venom gland.

It localises to the secreted. This chain is Insulin-like growth factor-binding protein-related protein 1, found in Cupiennius salei (American wandering spider).